The chain runs to 228 residues: Protein-L-isoaspartate O-methyltransferase (228 aa).

The disordered stretch occupies residues 1-20 (MVAVSLKMSQPAAPPPPMGE). Ser76 is a catalytic residue.

Belongs to the methyltransferase superfamily. L-isoaspartyl/D-aspartyl protein methyltransferase family.

The protein resides in the cytoplasm. It carries out the reaction [protein]-L-isoaspartate + S-adenosyl-L-methionine = [protein]-L-isoaspartate alpha-methyl ester + S-adenosyl-L-homocysteine. In terms of biological role, catalyzes the methyl esterification of L-isoaspartyl residues in peptides and proteins that result from spontaneous decomposition of normal L-aspartyl and L-asparaginyl residues. It plays a role in the repair and/or degradation of damaged proteins. The polypeptide is Protein-L-isoaspartate O-methyltransferase (Magnetococcus marinus (strain ATCC BAA-1437 / JCM 17883 / MC-1)).